The chain runs to 112 residues: Large ribosomal subunit protein P1 (112 aa).

The tract at residues 80-112 is disordered; it reads AAAAPAAESKKEEKKKEEESDQSDDDMGFGLFD. Residues 87–97 are compositionally biased toward basic and acidic residues; it reads ESKKEEKKKEE. Residues serine 99 and serine 102 each carry the phosphoserine modification.

This sequence belongs to the eukaryotic ribosomal protein P1/P2 family. P1 and P2 exist as dimers at the large ribosomal subunit.

In terms of biological role, plays an important role in the elongation step of protein synthesis. The protein is Large ribosomal subunit protein P1 (RpLP1) of Drosophila melanogaster (Fruit fly).